Consider the following 178-residue polypeptide: Inorganic pyrophosphatase (178 aa).

Residues Lys30, Arg44, and Tyr56 each contribute to the substrate site. 3 residues coordinate Mg(2+): Asp66, Asp71, and Asp103. Tyr142 lines the substrate pocket.

Belongs to the PPase family. As to quaternary structure, homohexamer. Mg(2+) serves as cofactor.

The protein resides in the cytoplasm. The enzyme catalyses diphosphate + H2O = 2 phosphate + H(+). In terms of biological role, catalyzes the hydrolysis of inorganic pyrophosphate (PPi) forming two phosphate ions. The sequence is that of Inorganic pyrophosphatase from Bradyrhizobium diazoefficiens (strain JCM 10833 / BCRC 13528 / IAM 13628 / NBRC 14792 / USDA 110).